The following is a 476-amino-acid chain: Chromosomal replication initiator protein DnaA (476 aa).

Positions 1–87 (MSDRSDPTHA…AGVSNFAIVV (87 aa)) are domain I, interacts with DnaA modulators. Residues 87-131 (VNPGIAQDAFAQHPEPAEQPYIETPTITAPTDNPGLPASPSRGDS) form a domain II region. A domain III, AAA+ region region spans residues 132–348 (RLNPKYGFDT…GTLIRVTAFA (217 aa)). Positions 176, 178, 179, and 180 each coordinate ATP. A domain IV, binds dsDNA region spans residues 349-476 (SLNKTPVDLA…IKQNHRYGKM (128 aa)).

This sequence belongs to the DnaA family. Oligomerizes as a right-handed, spiral filament on DNA at oriC.

Its subcellular location is the cytoplasm. Plays an essential role in the initiation and regulation of chromosomal replication. ATP-DnaA binds to the origin of replication (oriC) to initiate formation of the DNA replication initiation complex once per cell cycle. Binds the DnaA box (a 9 base pair repeat at the origin) and separates the double-stranded (ds)DNA. Forms a right-handed helical filament on oriC DNA; dsDNA binds to the exterior of the filament while single-stranded (ss)DNA is stabiized in the filament's interior. The ATP-DnaA-oriC complex binds and stabilizes one strand of the AT-rich DNA unwinding element (DUE), permitting loading of DNA polymerase. After initiation quickly degrades to an ADP-DnaA complex that is not apt for DNA replication. Binds acidic phospholipids. In Clavibacter sepedonicus (Clavibacter michiganensis subsp. sepedonicus), this protein is Chromosomal replication initiator protein DnaA.